A 2434-amino-acid polypeptide reads, in one-letter code: Protein Ycf2 (2434 aa).

1693-1700 (GPTETGRS) contributes to the ATP binding site.

It belongs to the Ycf2 family.

Its subcellular location is the plastid. The protein localises to the chloroplast stroma. Probable ATPase of unknown function. Its presence in a non-photosynthetic plant (Epifagus virginiana) and experiments in tobacco indicate that it has an essential function which is probably not related to photosynthesis. This is Protein Ycf2 from Cycas taitungensis (Prince sago).